The following is a 253-amino-acid chain: Phosphate import ATP-binding protein PstB (253 aa).

The 242-residue stretch at 7 to 248 (IKVRDLNLYY…PRDRRTEDYI (242 aa)) folds into the ABC transporter domain. 39 to 46 (GPSGCGKS) is a binding site for ATP.

The protein belongs to the ABC transporter superfamily. Phosphate importer (TC 3.A.1.7) family. As to quaternary structure, the complex is composed of two ATP-binding proteins (PstB), two transmembrane proteins (PstC and PstA) and a solute-binding protein (PstS).

The protein resides in the cell membrane. The catalysed reaction is phosphate(out) + ATP + H2O = ADP + 2 phosphate(in) + H(+). Functionally, part of the ABC transporter complex PstSACB involved in phosphate import. Responsible for energy coupling to the transport system. This is Phosphate import ATP-binding protein PstB from Carboxydothermus hydrogenoformans (strain ATCC BAA-161 / DSM 6008 / Z-2901).